A 224-amino-acid chain; its full sequence is ATP-dependent dethiobiotin synthetase BioD (224 aa).

Thr-18 is a Mg(2+) binding site. Lys-39 is a catalytic residue. Substrate is bound at residue Ser-43. Mg(2+) is bound by residues Asp-56 and Glu-117. ATP-binding positions include Asp-56, 117–120, and 177–178; these read EGVG and NE.

Belongs to the dethiobiotin synthetase family. As to quaternary structure, homodimer. Requires Mg(2+) as cofactor.

It localises to the cytoplasm. The enzyme catalyses (7R,8S)-7,8-diammoniononanoate + CO2 + ATP = (4R,5S)-dethiobiotin + ADP + phosphate + 3 H(+). The protein operates within cofactor biosynthesis; biotin biosynthesis; biotin from 7,8-diaminononanoate: step 1/2. Functionally, catalyzes a mechanistically unusual reaction, the ATP-dependent insertion of CO2 between the N7 and N8 nitrogen atoms of 7,8-diaminopelargonic acid (DAPA, also called 7,8-diammoniononanoate) to form a ureido ring. This is ATP-dependent dethiobiotin synthetase BioD from Xanthomonas axonopodis pv. citri (strain 306).